The primary structure comprises 273 residues: Tryptase-2 (273 aa).

Residues 1–18 form the signal peptide; the sequence is MLHLLALALLLSLVSAAP. Positions 19–28 are cleaved as a propeptide — activation peptide; sequence APGQALQRSG. The Peptidase S1 domain maps to 29–270; that stretch reads IIGGKEAPGS…YLDWIHQYVP (242 aa). C57 and C73 are oxidised to a cystine. Catalysis depends on charge relay system residues H72 and D119. Disulfide bonds link C153/C228, C186/C209, and C218/C246. The Charge relay system role is filled by S222. An N-linked (GlcNAc...) asparagine glycan is attached at N231.

Belongs to the peptidase S1 family. Tryptase subfamily. Homotetramer.

Its subcellular location is the secreted. It catalyses the reaction Preferential cleavage: Arg-|-Xaa, Lys-|-Xaa, but with more restricted specificity than trypsin.. Functionally, tryptase is the major neutral protease present in mast cells and is secreted upon the coupled activation-degranulation response of this cell type. The sequence is that of Tryptase-2 from Ovis aries (Sheep).